A 325-amino-acid chain; its full sequence is Glutarate 2-hydroxylase (325 aa).

Fe cation contacts are provided by histidine 160, aspartate 162, and histidine 292.

The protein belongs to the glutarate hydroxylase family. As to quaternary structure, homotetramer. It depends on Fe(2+) as a cofactor.

It catalyses the reaction glutarate + 2-oxoglutarate + O2 = (S)-2-hydroxyglutarate + succinate + CO2. It participates in amino-acid degradation. Functionally, acts as an alpha-ketoglutarate-dependent dioxygenase catalyzing hydroxylation of glutarate (GA) to L-2-hydroxyglutarate (L2HG). Functions in a L-lysine degradation pathway that proceeds via cadaverine, glutarate and L-2-hydroxyglutarate. The polypeptide is Glutarate 2-hydroxylase (Escherichia coli O6:K15:H31 (strain 536 / UPEC)).